The primary structure comprises 128 residues: Glycophorin-C (128 aa).

The span at 1–12 (MWSTRSPNSTAW) shows a compositional bias: polar residues. The tract at residues 1 to 48 (MWSTRSPNSTAWPLSLEPDPGMASASTTMHTTTIAEPDPGMSGWPDGR) is disordered. Residues 1–57 (MWSTRSPNSTAWPLSLEPDPGMASASTTMHTTTIAEPDPGMSGWPDGRMETSTPTIM) lie on the Extracellular side of the membrane. O-linked (GalNAc...) serine glycosylation occurs at S3. O-linked (GalNAc...) threonine glycosylation occurs at T4. O-linked (GalNAc...) serine glycosylation is present at S6. A glycan (N-linked (GlcNAc...) asparagine) is linked at N8. S9 carries an O-linked (GalNAc...) serine glycan. The O-linked (GalNAc...) threonine glycan is linked to T10. O-linked (GalNAc...) serine glycans are attached at residues S15, S24, and S26. Over residues 22–33 (MASASTTMHTTT) the composition is skewed to low complexity. O-linked (GalNAc...) threonine glycans are attached at residues T27, T28, T31, T32, and T33. O-linked (GalNAc...) serine glycosylation is present at S42. Residues 58 to 81 (DIVVIAGVIAAVAIVLVSLLFVML) traverse the membrane as a helical; Signal-anchor for type III membrane protein segment. Over 82–128 (RYMYRHKGTYHTNEAKGTEFAESADAALQGDPALQDAGDSSRKEYFI) the chain is Cytoplasmic. 2 positions are modified to phosphoserine: S104 and S122. Positions 108–128 (ALQGDPALQDAGDSSRKEYFI) are disordered.

It belongs to the glycophorin-C family. O-glycosylated with core 1 or possibly core 8 glycans. In terms of tissue distribution, glycophorin-C is expressed in erythrocytes. Glycophorin-D and IsoGPC are ubiquitously expressed.

It is found in the cell membrane. In terms of biological role, this protein is a minor sialoglycoprotein in human erythrocyte membranes. The blood group Gerbich antigens and receptors for Plasmodium falciparum merozoites are most likely located within the extracellular domain. Glycophorin-C plays an important role in regulating the stability of red cells. The polypeptide is Glycophorin-C (GYPC) (Homo sapiens (Human)).